Reading from the N-terminus, the 1193-residue chain is Cysteine protease ATG4 (1193 aa).

Disordered stretches follow at residues 23–284 (AAIA…NKMS) and 358–474 (WRPI…KKKS). A compositionally biased stretch (pro residues) spans 35–49 (NLPPPPPPDRIPPPK). A compositionally biased stretch (basic residues) spans 50 to 59 (GRSHQQKFKI). Basic and acidic residues-rich tracts occupy residues 60-72 (LRKE…RQPI), 117-127 (ANREEKKEKTS), and 140-153 (FGRD…KPEE). Residues 170–185 (SSSTSTDSTTSRSITS) are compositionally biased toward low complexity. Residues 186–205 (AFTRQNSIQSRRSPRTSFGQ) are compositionally biased toward polar residues. The span at 227-238 (SSTTSHDPSSDP) shows a compositional bias: low complexity. 3 stretches are compositionally biased toward polar residues: residues 253-262 (QGASMSSLSR), 270-284 (GGTS…NKMS), and 389-447 (LSMN…STLS). Catalysis depends on Cys-570, which acts as the Nucleophile. Residues Asp-789 and His-791 contribute to the active site. Disordered stretches follow at residues 807–869 (HSAK…SKYK), 899–924 (VPKS…TSTA), and 1000–1171 (QDEM…PARN). The span at 835-846 (RTPETPRSTTPS) shows a compositional bias: low complexity. Acidic residues-rich tracts occupy residues 1004–1029 (PSWE…EFEE) and 1070–1084 (HLDV…DDNE). 2 stretches are compositionally biased toward basic and acidic residues: residues 1097-1112 (IARH…KREQ) and 1152-1164 (PRYE…EQER).

It belongs to the peptidase C54 family.

The protein resides in the cytoplasm. It localises to the nucleus. The protein localises to the preautophagosomal structure. It carries out the reaction [protein]-C-terminal L-amino acid-glycyl-phosphatidylethanolamide + H2O = [protein]-C-terminal L-amino acid-glycine + a 1,2-diacyl-sn-glycero-3-phosphoethanolamine. Cysteine protease that plays a key role in cytoplasm to vacuole transport (Cvt) and autophagy by mediating both proteolytic activation and delipidation of ATG8. Required for selective autophagic degradation of the nucleus (nucleophagy) as well as for mitophagy which contributes to regulate mitochondrial quantity and quality by eliminating the mitochondria to a basal level to fulfill cellular energy requirements and preventing excess ROS production. The protease activity is required for proteolytic activation of ATG8: cleaves the C-terminal amino acid of ATG8 to reveal a C-terminal glycine. ATG8 ubiquitin-like activity requires the exposure of the glycine at the C-terminus for its conjugation to phosphatidylethanolamine (PE) and its insertion to membranes, which is necessary for autophagy. The ATG8-PE conjugate mediates tethering between adjacent membranes and stimulates membrane hemifusion, leading to expansion of the autophagosomal membrane during autophagy. In addition to the protease activity, also catalyzes deconjugation of PE-conjugated forms of ATG8 during macroautophagy: ATG8 delipidation is required to release the protein from membranes, which facilitates multiple events during macroautophagy, and especially for efficient autophagosome biogenesis, the assembly of ATG9-containing tubulovesicular clusters into phagophores/autophagosomes, and for the disassembly of PAS-associated ATG components. ATG8 delipidation by ATG4 also recycles ATG8-PE generated on inappropriate membranes to maintain a reservoir of unlipidated ATG8 that is required for autophagosome formation at the PAS. The polypeptide is Cysteine protease ATG4 (ATG4) (Cryptococcus neoformans var. neoformans serotype D (strain JEC21 / ATCC MYA-565) (Filobasidiella neoformans)).